The sequence spans 60 residues: Large ribosomal subunit protein uL30 (60 aa).

Belongs to the universal ribosomal protein uL30 family. As to quaternary structure, part of the 50S ribosomal subunit.

This chain is Large ribosomal subunit protein uL30, found in Oceanobacillus iheyensis (strain DSM 14371 / CIP 107618 / JCM 11309 / KCTC 3954 / HTE831).